Reading from the N-terminus, the 200-residue chain is MSKYAGIVLAGGMSSRFGEPKALASWQGSTFIEHILKVMTSTLQEVVVISHSDIKERVEKLVQVPVIEDIPHYKGNGPLAGIVSGMEYIEADWYAIMPCDAPNVSHEWFTILLGQTSNEYDAVVPIINGRKQPLLAAYHNRVKEKIYALLQEEKRSMVQLLSQCNVKYIAGEDVQANADWFINVNTKEEYVQAQKDLSNK.

GTP contacts are provided by residues Leu9 to Gly11, Lys21, Asp69, and Asp100. Mg(2+) is bound at residue Asp100.

Belongs to the MobA family. The cofactor is Mg(2+).

Its subcellular location is the cytoplasm. It catalyses the reaction Mo-molybdopterin + GTP + H(+) = Mo-molybdopterin guanine dinucleotide + diphosphate. Transfers a GMP moiety from GTP to Mo-molybdopterin (Mo-MPT) cofactor (Moco or molybdenum cofactor) to form Mo-molybdopterin guanine dinucleotide (Mo-MGD) cofactor. This chain is Probable molybdenum cofactor guanylyltransferase, found in Bacillus cereus (strain AH820).